The primary structure comprises 24 residues: Brevinin-1Pa (24 aa).

A disulfide bridge links Cys18 with Cys24.

In terms of tissue distribution, expressed by the skin glands.

It is found in the secreted. Functionally, antibacterial activity against Gram-positive bacterium S.aureus and Gram-negative bacterium E.coli. Has activity against C.albicans. The protein is Brevinin-1Pa of Lithobates pipiens (Northern leopard frog).